The following is a 165-amino-acid chain: Protein SEED AND ROOT HAIR PROTECTIVE PROTEIN (165 aa).

An N-terminal signal peptide occupies residues 1 to 24 (MAFSRLSFAASLIVFSSLIISSVA).

It belongs to the plant proline-rich protein superfamily. As to expression, root hair and seed specific expression. Also observed in other tissues including siliques, roots and flowers.

The protein resides in the secreted. It is found in the cell wall. Contributes to cell wall structure in root hairs and seeds, especially in phosphate (Pi) deprivation conditions or in the presence of ethylene. Particularly important in maternal tissues (pericarps and seed coats) during seed development, especially under stress conditions. Confers thermotolerance in seed germination rate. This is Protein SEED AND ROOT HAIR PROTECTIVE PROTEIN from Arabidopsis thaliana (Mouse-ear cress).